The primary structure comprises 286 residues: MISSKTSFIALIGNPVSHSLSPIMQNAALQYLGLDLIYIAMPCKDEDLELVMNSLKKINCKGLNITIPHKEKVFDLCSEISPIANKLKAINTLKLNSAKEWSATNTDVEGFIYPLKTLNLTKKQSIVLGSGGAARSVIQGLINLNFSTISVVSRNKSSLDELIKNFENQITIEGLLNNDNRTETLIEEADLIVNTTPVGMKTTKHEMNVLPYGDVFWRSLNSKTIVYDLIYNPAPTPLLKFSAKKGCITIDGLKMLVAQGAKSLSFWTNGLEVPFHIMNDALKNYL.

Residues 19–21 (SLS) and T66 contribute to the shikimate site. K70 acts as the Proton acceptor in catalysis. 2 residues coordinate shikimate: N91 and D107. NADP(+) contacts are provided by residues 129–133 (GSGGA) and L229. Residue Y231 participates in shikimate binding. G252 contributes to the NADP(+) binding site.

This sequence belongs to the shikimate dehydrogenase family. In terms of assembly, homodimer.

It carries out the reaction shikimate + NADP(+) = 3-dehydroshikimate + NADPH + H(+). The protein operates within metabolic intermediate biosynthesis; chorismate biosynthesis; chorismate from D-erythrose 4-phosphate and phosphoenolpyruvate: step 4/7. Functionally, involved in the biosynthesis of the chorismate, which leads to the biosynthesis of aromatic amino acids. Catalyzes the reversible NADPH linked reduction of 3-dehydroshikimate (DHSA) to yield shikimate (SA). The chain is Shikimate dehydrogenase (NADP(+)) from Prochlorococcus marinus (strain MIT 9312).